A 447-amino-acid chain; its full sequence is MTKVITRFAPSPTGMLHVGNIRAALLNWLYAKKHNGQFILRFDDTDLERSKQEYKDAIEEDLKFLNINWDQTFNQLSRLSRYDEIKNLLLDKKRLYACYETPEELELKRKFQLSKGLPPIYDRASLNLTEEQAKKYIEQGRKPHYRFLVNHELINWHDMIKGEVKYDGKALSDPIVIRADGSMTYMLCSVIDDIDYDITHIIRGEDHVSNTAIQIQMFEALNTTPPTFGHLSLIINKDEKISKRVGGFEIATLRKEVGIEAMAIASFFSLLGSSAQILPYKSMEKLANQFEISSFSKSPTIYQPEDLERLNHKLLISLDFDTVKERLKEINAEYIDENFWLSVSPNLQKLRDVKDWWEICHQTPNVENLNLDKEYLKQAAELLPKGEITKDSWSIWTKEITNITGRKGKELFLPLRLALTARESGPEITGVLPLIDREEIIKRLTSA.

Positions proline 10–asparagine 20 match the 'HIGH' region motif. The 'KMSKS' region signature appears at lysine 240–arginine 244. Residue lysine 243 participates in ATP binding.

This sequence belongs to the class-I aminoacyl-tRNA synthetase family. Glutamate--tRNA ligase type 1 subfamily. As to quaternary structure, monomer.

It is found in the cytoplasm. It catalyses the reaction tRNA(Glu) + L-glutamate + ATP = L-glutamyl-tRNA(Glu) + AMP + diphosphate. In terms of biological role, catalyzes the attachment of glutamate to tRNA(Glu) in a two-step reaction: glutamate is first activated by ATP to form Glu-AMP and then transferred to the acceptor end of tRNA(Glu). This Rickettsia massiliae (strain Mtu5) protein is Glutamate--tRNA ligase 1.